The chain runs to 470 residues: Poly(A) polymerase catalytic subunit (470 aa).

Residues D192 and D194 contribute to the active site.

Belongs to the poxviridae poly(A) polymerase catalytic subunit family. Heterodimer of a large (catalytic) subunit and a small (regulatory) subunit.

The enzyme catalyses RNA(n) + ATP = RNA(n)-3'-adenine ribonucleotide + diphosphate. Functionally, polymerase that creates the 3'-poly(A) tail of mRNA's. The sequence is that of Poly(A) polymerase catalytic subunit (PAPL) from Sus scrofa (Pig).